The sequence spans 209 residues: Large ribosomal subunit protein uL3 (209 aa).

A disordered region spans residues 133–153; that stretch reads THGNSLSHRVPGSIGQNQTPG. Glutamine 150 bears the N5-methylglutamine mark.

This sequence belongs to the universal ribosomal protein uL3 family. As to quaternary structure, part of the 50S ribosomal subunit. Forms a cluster with proteins L14 and L19. In terms of processing, methylated by PrmB.

Functionally, one of the primary rRNA binding proteins, it binds directly near the 3'-end of the 23S rRNA, where it nucleates assembly of the 50S subunit. The protein is Large ribosomal subunit protein uL3 of Serratia proteamaculans (strain 568).